The primary structure comprises 98 residues: NADH-ubiquinone oxidoreductase chain 4L (98 aa).

3 helical membrane-spanning segments follow: residues 2–22, 29–49, and 61–81; these read PSIF…TLVF, SLLC…LIIL, and ILLL…LVMV.

The protein belongs to the complex I subunit 4L family. In terms of assembly, core subunit of respiratory chain NADH dehydrogenase (Complex I) which is composed of 45 different subunits.

The protein localises to the mitochondrion inner membrane. The catalysed reaction is a ubiquinone + NADH + 5 H(+)(in) = a ubiquinol + NAD(+) + 4 H(+)(out). Functionally, core subunit of the mitochondrial membrane respiratory chain NADH dehydrogenase (Complex I) which catalyzes electron transfer from NADH through the respiratory chain, using ubiquinone as an electron acceptor. Part of the enzyme membrane arm which is embedded in the lipid bilayer and involved in proton translocation. The protein is NADH-ubiquinone oxidoreductase chain 4L (MT-ND4L) of Propithecus tattersalli (Golden-crowned Sifaka).